A 475-amino-acid polypeptide reads, in one-letter code: MSEYQYNKVTPEMIEKFKEIAPKRVLVGDEINEDFTHDEMAIYGKARPEVLVEATSTEEVAAVVKLCNENKIPVTPSGARTGLVGGAVSIGGGVMISLTKMNKILGYDKENFVVKIQSGVLLNDLAQDAEKQGLLYPPDPGEKFATVGGNVATNAGGMRAVKYGCTRDYVRAMTVVLPTGEIVKLGATVSKTSSGYSLLNLMIGSEGTLGIITELTLKVIPAPKSVISLIIPYENLEDCIATVPQFFMHHLAPQALEFMEKEVVMDTEKFLGKQVYPKELEGTEIGAYLLATFDGNSEEQLEDIIEQASEVVLEAGAIDVLVADTPALKKDAWAVRGALLEAIEADTVLLDECDVVVPTNKIAEFLTYTKSLEAEADFRVKSFGHAGDGNLHIYTCSNDMEEGEFKKQVAVFMDKVYAKATEFGGMISGEHGIGHGKMDYLAESLGPVQMRIMEGVKEVFDPNMILNPGKICYKL.

The FAD-binding PCMH-type domain maps to 43–222 (YGKARPEVLV…TELTLKVIPA (180 aa)).

The protein belongs to the FAD-binding oxidoreductase/transferase type 4 family. Requires FAD as cofactor. The cofactor is Zn(2+).

It carries out the reaction (R)-lactate + A = pyruvate + AH2. Catalyzes the dehydrogenation of (R)-lactate (D-lactate) to pyruvate. Active in vitro with the artificial electron acceptor 2,6-dichlorophenolindophenol (DCPIP), but not with NAD, NADP, or cytochrome c. Also displays a very low oxidase activity in vitro on D-lactate and L-lactate with O2 as the electron acceptor, but this activity is most likely not physiological. In Anaerostipes hadrus, this protein is D-lactate dehydrogenase.